A 235-amino-acid polypeptide reads, in one-letter code: Sugar fermentation stimulation protein homolog (235 aa).

The protein belongs to the SfsA family.

This chain is Sugar fermentation stimulation protein homolog, found in Aliivibrio fischeri (strain ATCC 700601 / ES114) (Vibrio fischeri).